Here is a 94-residue protein sequence, read N- to C-terminus: MLKPLGDRVLLKIEEKEQTVGGFVLAGSAQEKTKTAQVVATGQGVRTLNGDLVAPSVKTGDRVLVEAHAGLDVKDGDEKYIIVGEANILAIIEE.

This sequence belongs to the GroES chaperonin family. As to quaternary structure, heptamer of 7 subunits arranged in a ring. Interacts with the chaperonin GroEL.

It is found in the cytoplasm. Functionally, together with the chaperonin GroEL, plays an essential role in assisting protein folding. The GroEL-GroES system forms a nano-cage that allows encapsulation of the non-native substrate proteins and provides a physical environment optimized to promote and accelerate protein folding. GroES binds to the apical surface of the GroEL ring, thereby capping the opening of the GroEL channel. The polypeptide is Co-chaperonin GroES (Streptococcus pneumoniae (strain ATCC BAA-255 / R6)).